We begin with the raw amino-acid sequence, 161 residues long: Deoxyuridine 5'-triphosphate nucleotidohydrolase (161 aa).

Residues 80–82 (RSG), Asn93, 97–99 (TVD), and Lys107 contribute to the substrate site.

This sequence belongs to the dUTPase family. Requires Mg(2+) as cofactor.

It carries out the reaction dUTP + H2O = dUMP + diphosphate + H(+). It participates in pyrimidine metabolism; dUMP biosynthesis; dUMP from dCTP (dUTP route): step 2/2. In terms of biological role, this enzyme is involved in nucleotide metabolism: it produces dUMP, the immediate precursor of thymidine nucleotides and it decreases the intracellular concentration of dUTP so that uracil cannot be incorporated into DNA. This chain is Deoxyuridine 5'-triphosphate nucleotidohydrolase, found in Mesorhizobium japonicum (strain LMG 29417 / CECT 9101 / MAFF 303099) (Mesorhizobium loti (strain MAFF 303099)).